Reading from the N-terminus, the 156-residue chain is Small ribosomal subunit protein uS7 (156 aa).

This sequence belongs to the universal ribosomal protein uS7 family. Part of the 30S ribosomal subunit. Contacts proteins S9 and S11.

Its function is as follows. One of the primary rRNA binding proteins, it binds directly to 16S rRNA where it nucleates assembly of the head domain of the 30S subunit. Is located at the subunit interface close to the decoding center, probably blocks exit of the E-site tRNA. The polypeptide is Small ribosomal subunit protein uS7 (Anaeromyxobacter dehalogenans (strain 2CP-1 / ATCC BAA-258)).